We begin with the raw amino-acid sequence, 267 residues long: 5'-methylthioadenosine nucleosidase (267 aa).

E38 acts as the Proton acceptor in catalysis. Residues T116, 199 to 202 (KDME), and D225 contribute to the S-methyl-5'-thioadenosine site. Adenine-binding residues include K199 and D225. D225 acts as the Proton donor in catalysis.

This sequence belongs to the PNP/UDP phosphorylase family. MtnN subfamily. Homodimer. Interacts with CBL3 in a calcium-dependent manner. As to expression, expressed in roots, leaves, stems, cauline leaves and flowers.

The catalysed reaction is S-methyl-5'-thioadenosine + H2O = 5-(methylsulfanyl)-D-ribose + adenine. The protein operates within amino-acid biosynthesis; L-methionine biosynthesis via salvage pathway; S-methyl-5-thio-alpha-D-ribose 1-phosphate from S-methyl-5'-thioadenosine (hydrolase route): step 1/2. With respect to regulation, inhibited by CBL3 in a calcium-dependent manner. Inhibited by 5'-methylthiotubercidin (MTT) and by formycin A (FMA). Functionally, enzyme of the methionine cycle that catalyzes the irreversible cleavage of the glycosidic bond in 5'-methylthioadenosine (MTA) to adenine and 5'-methylthioribose. Contributes to the maintenance of AdoMet homeostasis and is required to sustain high rates of ethylene synthesis. Inactive towards S-adenosylhomocysteine (SAH/AdoHcy). The sequence is that of 5'-methylthioadenosine nucleosidase (MTN1) from Arabidopsis thaliana (Mouse-ear cress).